The sequence spans 233 residues: Probable GTP-binding protein EngB (233 aa).

One can recognise an EngB-type G domain in the interval 31–205 (TGVEIAFAGR…RRKLDTWFGP (175 aa)). GTP is bound by residues 39-46 (GRSNAGKS), 66-70 (GRTQL), 84-87 (DLPG), 151-154 (TKAD), and 184-186 (FSS). Ser-46 and Thr-68 together coordinate Mg(2+).

This sequence belongs to the TRAFAC class TrmE-Era-EngA-EngB-Septin-like GTPase superfamily. EngB GTPase family. Requires Mg(2+) as cofactor.

Its function is as follows. Necessary for normal cell division and for the maintenance of normal septation. This is Probable GTP-binding protein EngB from Photobacterium profundum (strain SS9).